The sequence spans 314 residues: Zinc-binding alcohol dehydrogenase domain-containing protein cipB (314 aa).

Belongs to the zinc-containing alcohol dehydrogenase family.

In terms of biological role, involved in osmoadaptation. In Emericella nidulans (strain FGSC A4 / ATCC 38163 / CBS 112.46 / NRRL 194 / M139) (Aspergillus nidulans), this protein is Zinc-binding alcohol dehydrogenase domain-containing protein cipB (cipB).